The chain runs to 363 residues: Adenylate cyclase 2 (363 aa).

The region spanning V157–E286 is the Guanylate cyclase domain. Positions 162 and 206 each coordinate Mg(2+). Residues G341–L363 are disordered.

It belongs to the adenylyl cyclase class-3 family. It depends on Mg(2+) as a cofactor.

The catalysed reaction is ATP = 3',5'-cyclic AMP + diphosphate. In terms of biological role, plays essential roles in regulation of cellular metabolism by catalyzing the synthesis of a second messenger, cAMP. In Rhizobium meliloti (strain 1021) (Ensifer meliloti), this protein is Adenylate cyclase 2 (cya2).